Here is a 330-residue protein sequence, read N- to C-terminus: MRSFTNLNPCYVLLPFFLVLATNATHTNNFLPRPRTGYYGSACWNVESIVRSVVESNYLANPANAPGILRMHFHDCFVQGCDASVLLAGPNSERTAIPNLSLRGFNVIEEAKTQLEIACPRTVSCADILALAARDFVHLAGGPWWPVPLGRLDGRISLASNVILPGPTDSVAVQKLRFAEKNLNTQDLVVLAAGHTIGTAGCIVFRDRFFNYDNTGSPDPTIAPSFVPLIQAQCPLNGDPATRVVLDTGSGDQFDTSYLNNLKNGRGLLESDQVLWTNLETRPIVERLLGLRFPFLIFGLEFARSMTKMSQIEIKTGLDGEIRRVCSAVN.

The N-terminal stretch at 1–24 (MRSFTNLNPCYVLLPFFLVLATNA) is a signal peptide. Cystine bridges form between Cys43–Cys119, Cys76–Cys81, Cys125–Cys326, and Cys202–Cys234. The active-site Proton acceptor is the His74. Ca(2+) is bound by residues Asp75, Val78, Gly80, Asp82, and Ser84. A substrate-binding site is contributed by Pro165. Residue His195 coordinates heme b. Residue Thr196 coordinates Ca(2+). Residues Asp247, Ser250, and Asp255 each coordinate Ca(2+).

The protein belongs to the peroxidase family. Classical plant (class III) peroxidase subfamily. Heme b is required as a cofactor. The cofactor is Ca(2+).

It localises to the secreted. The catalysed reaction is 2 a phenolic donor + H2O2 = 2 a phenolic radical donor + 2 H2O. Removal of H(2)O(2), oxidation of toxic reductants, biosynthesis and degradation of lignin, suberization, auxin catabolism, response to environmental stresses such as wounding, pathogen attack and oxidative stress. These functions might be dependent on each isozyme/isoform in each plant tissue. The chain is Peroxidase 70 (PER70) from Arabidopsis thaliana (Mouse-ear cress).